We begin with the raw amino-acid sequence, 198 residues long: Syndecan-4 (198 aa).

Residues 1 to 23 (MAPACLLAPLLLLLLGGFPLVPG) form the signal peptide. The Extracellular segment spans residues 24-145 (ESIRETEVID…QGSNIFERTE (122 aa)). 2 disordered regions span residues 42–76 (YFSG…PRPF) and 94–130 (AQPG…NKVS). 3 O-linked (Xyl...) (glycosaminoglycan) serine glycosylation sites follow: serine 44, serine 62, and serine 64. A compositionally biased stretch (acidic residues) spans 48–71 (PDDEDAGGSDDFELSGSGDLDDTE). The segment covering 102-118 (SEPKELEENEVIPKRAP) has biased composition (basic and acidic residues). A helical transmembrane segment spans residues 146-170 (VLAALIVGGVVGILFAVFLILLLVY). Residues 171–198 (RMKKKDEGSYDLGKKPIYKKAPTNEFYA) are Cytoplasmic-facing.

It belongs to the syndecan proteoglycan family. Homodimer. Interacts with CDCP1 and SDCBP. Interacts (via its cytoplasmic domain) with GIPC (via its PDZ domain). Interacts (via its cytoplasmic domain) with NUDT16L1. Interacts with DNM2; this interaction is markedly enhanced at focal ahesion site upon induction of focal adhesions and stress-fiber formation. In terms of processing, shedding is enhanced by a number of factors such as heparanase, thrombin or EGF. Also by stress and wound healing. PMA-mediated shedding is inhibited by TIMP3. O-glycosylated; contains both chondroitin sulfate and heparan sulfate. Ser-44, Ser-62 and Ser-64 can all be modified by either chondroitin sulfate or heparan sulfate, and the protein exists in forms that contain only chondroitin sulfate, only heparan sulfate and both chondroitin sulfate and heparan sulfate. In terms of tissue distribution, ubiquitous. Highest levels in liver, kidney and lung.

Its subcellular location is the membrane. It localises to the secreted. Its function is as follows. Cell surface proteoglycan which regulates exosome biogenesis in concert with SDCBP and PDCD6IP. The polypeptide is Syndecan-4 (Mus musculus (Mouse)).